A 162-amino-acid chain; its full sequence is ATP synthase subunit b (162 aa).

The chain crosses the membrane as a helical span at residues 8 to 28 (LTGIIQLLNFLILLFVLYKFL).

The protein belongs to the ATPase B chain family. As to quaternary structure, F-type ATPases have 2 components, F(1) - the catalytic core - and F(0) - the membrane proton channel. F(1) has five subunits: alpha(3), beta(3), gamma(1), delta(1), epsilon(1). F(0) has three main subunits: a(1), b(2) and c(10-14). The alpha and beta chains form an alternating ring which encloses part of the gamma chain. F(1) is attached to F(0) by a central stalk formed by the gamma and epsilon chains, while a peripheral stalk is formed by the delta and b chains.

The protein resides in the cell inner membrane. Functionally, f(1)F(0) ATP synthase produces ATP from ADP in the presence of a proton or sodium gradient. F-type ATPases consist of two structural domains, F(1) containing the extramembraneous catalytic core and F(0) containing the membrane proton channel, linked together by a central stalk and a peripheral stalk. During catalysis, ATP synthesis in the catalytic domain of F(1) is coupled via a rotary mechanism of the central stalk subunits to proton translocation. Component of the F(0) channel, it forms part of the peripheral stalk, linking F(1) to F(0). The protein is ATP synthase subunit b of Pseudothermotoga lettingae (strain ATCC BAA-301 / DSM 14385 / NBRC 107922 / TMO) (Thermotoga lettingae).